The following is a 401-amino-acid chain: MGEEATAVAAAGVRPELVREAEVSLLECKVCFERFGHWQQRRPRNLPCGHVVCLACVAALAHPRTLGLECPFCRRACRACDTSDCLPVLHLLELLGSTLHASPAALSAAPFAPGTLTCYHAFGGWGTLVNPTGLALCPKTGRVVVVHDGKRRVKIFDSGGGGAHQFGEKGDAAHDVKYPLDVAVTNDCHVVVTDAGDCSLKVFDFFGQIKLVVGKQFSLPWGVEITPHNGVLVTDAEAGTLHLLEADFPEGVLRRIERLQAHLCSPRGLAVSWLTGAIAVLEHPCAFGRTGCNNTRVKVFNSTMQLIGQVDSFGLNLLFPSKVTASAVTFDHQGNVIVADTSGPAIVCLGKPEEFPALKPIITHGLSRPVALAFTKENSLLVLDTASHSIKVFKVMEGNGG.

The segment at 28-74 (CKVCFERFGHWQQRRPRNLPCGHVVCLACVAALAHPRTLGLECPFCR) adopts an RING-type zinc-finger fold. NHL repeat units lie at residues 115–159 (TLTC…FDSG), 163–206 (AHQF…FDFF), 207–247 (GQIK…LEAD), 250–303 (EGVL…FNST), 304–352 (MQLI…LGKP), and 353–396 (EEFP…FKVM).

Interacts with AGL. Interacts (via the NHL repeats) with EPM2A/laforin. Forms a complex with EPM2A/laforin and HSP70. Interacts with PRDM8.

The protein localises to the endoplasmic reticulum. It localises to the nucleus. The catalysed reaction is S-ubiquitinyl-[E2 ubiquitin-conjugating enzyme]-L-cysteine + [acceptor protein]-L-lysine = [E2 ubiquitin-conjugating enzyme]-L-cysteine + N(6)-ubiquitinyl-[acceptor protein]-L-lysine.. The protein operates within protein modification; protein ubiquitination. Functionally, E3 ubiquitin-protein ligase. Together with the phosphatase EPM2A/laforin, appears to be involved in the clearance of toxic polyglucosan and protein aggregates via multiple pathways. In complex with EPM2A/laforin and HSP70, suppresses the cellular toxicity of misfolded proteins by promoting their degradation through the ubiquitin-proteasome system (UPS). Ubiquitinates the glycogen-targeting protein phosphatase subunits PPP1R3C/PTG and PPP1R3D in a laforin-dependent manner and targets them for proteasome-dependent degradation, thus decreasing glycogen accumulation. Polyubiquitinates EPM2A/laforin and ubiquitinates AGL and targets them for proteasome-dependent degradation. Also promotes proteasome-independent protein degradation through the macroautophagy pathway. This is E3 ubiquitin-protein ligase NHLRC1 (Nhlrc1) from Mus musculus (Mouse).